Consider the following 33-residue polypeptide: Alpha-amanitin proprotein 2 (33 aa).

Residues 1–10 (MSDINATRLP) constitute a propeptide that is removed on maturation. Position 11 is a (3R,4R)-4,5-dihydroxyisoleucine; in form alpha-amanitin (Ile-11). Position 11 is a (3R,4S)-4-hydroxyisoleucine; in form gamma-amanitin (Ile-11). The cyclopeptide (Ile-Pro) cross-link spans 11–18 (IWGIGCNP). The segment at residues 12-16 (WGIGC) is a cross-link (2'-cysteinyl-6'-hydroxytryptophan sulfoxide (Trp-Cys)). Pro-18 carries the post-translational modification 4-hydroxyproline. Positions 19-33 (CVGDDVTSVLTRGEA) are excised as a propeptide.

It belongs to the MSDIN fungal toxin family. Post-translationally, processed by the macrocyclase-peptidase enzyme POPB to yield a toxic cyclic octapeptide. POPB first removes 10 residues from the N-terminus. Conformational trapping of the remaining peptide forces the enzyme to release this intermediate rather than proceed to macrocyclization. The enzyme rebinds the remaining peptide in a different conformation and catalyzes macrocyclization of the N-terminal 8 residues. Expressed in basidiocarps.

Major toxin belonging to the bicyclic octapeptides amatoxins that acts by binding non-competitively to RNA polymerase II and greatly slowing the elongation of transcripts from target promoters. In Amanita exitialis (Guangzhou destroying angel), this protein is Alpha-amanitin proprotein 2.